The sequence spans 540 residues: 2,3-bisphosphoglycerate-independent phosphoglycerate mutase (540 aa).

Residues aspartate 24 and serine 74 each contribute to the Mn(2+) site. Serine 74 (phosphoserine intermediate) is an active-site residue. Substrate-binding positions include histidine 135, 165 to 166 (RD), arginine 197, arginine 203, 268 to 271 (RPDR), and lysine 341. Residues aspartate 408, histidine 412, aspartate 449, histidine 450, and histidine 467 each contribute to the Mn(2+) site.

Belongs to the BPG-independent phosphoglycerate mutase family. Monomer. Mn(2+) is required as a cofactor.

It carries out the reaction (2R)-2-phosphoglycerate = (2R)-3-phosphoglycerate. It functions in the pathway carbohydrate degradation; glycolysis; pyruvate from D-glyceraldehyde 3-phosphate: step 3/5. Functionally, catalyzes the interconversion of 2-phosphoglycerate and 3-phosphoglycerate. This Prochlorococcus marinus (strain MIT 9303) protein is 2,3-bisphosphoglycerate-independent phosphoglycerate mutase.